The following is a 417-amino-acid chain: CinA-like protein (417 aa).

This sequence belongs to the CinA family.

This is CinA-like protein from Leptospira biflexa serovar Patoc (strain Patoc 1 / Ames).